We begin with the raw amino-acid sequence, 219 residues long: Interleukin-12 subunit alpha (219 aa).

Positions 1 to 22 are cleaved as a signal peptide; the sequence is MCPARSLLLVATLVLLDHLSLA. 3 disulfide bridges follow: cysteine 37–cysteine 110, cysteine 64–cysteine 196, and cysteine 85–cysteine 123. Asparagine 93 and asparagine 107 each carry an N-linked (GlcNAc...) asparagine glycan.

This sequence belongs to the IL-6 superfamily. In terms of assembly, heterodimer with IL12B; disulfide-linked. This heterodimer is known as interleukin IL-12. Heterodimer with EBI3/IL27B; not disulfide-linked. This heterodimer is known as interleukin IL-35. Interacts with NBR1; this interaction promotes IL-12 secretion.

It localises to the secreted. Its function is as follows. Heterodimerizes with IL12B to form the IL-12 cytokine or with EBI3/IL27B to form the IL-35 cytokine. IL-12 is primarily produced by professional antigen-presenting cells (APCs) such as B-cells and dendritic cells (DCs) as well as macrophages and granulocytes and regulates T-cell and natural killer-cell responses, induces the production of interferon-gamma (IFN-gamma), favors the differentiation of T-helper 1 (Th1) cells and is an important link between innate resistance and adaptive immunity. Mechanistically, exerts its biological effects through a receptor composed of IL12R1 and IL12R2 subunits. Binding to the receptor results in the rapid tyrosine phosphorylation of a number of cellular substrates including the JAK family kinases TYK2 and JAK2. In turn, recruited STAT4 gets phosphorylated and translocates to the nucleus where it regulates cytokine/growth factor responsive genes. As part of IL-35, plays essential roles in maintaining the immune homeostasis of the liver microenvironment and also functions as an immune-suppressive cytokine. Mediates biological events through unconventional receptors composed of IL12RB2 and gp130/IL6ST heterodimers or homodimers. Signaling requires the transcription factors STAT1 and STAT4, which form a unique heterodimer that binds to distinct DNA sites. The polypeptide is Interleukin-12 subunit alpha (IL12A) (Homo sapiens (Human)).